The chain runs to 1581 residues: Laminin subunit gamma-3 (1581 aa).

An N-terminal signal peptide occupies residues Met-1 to Gly-28. The Laminin N-terminal domain maps to Arg-40–Arg-279. The N-linked (GlcNAc...) asparagine glycan is linked to Asn-128. Intrachain disulfides connect Cys-280/Cys-289, Cys-282/Cys-299, Cys-301/Cys-310, Cys-313/Cys-333, Cys-336/Cys-345, Cys-338/Cys-361, Cys-364/Cys-373, Cys-376/Cys-389, Cys-392/Cys-404, Cys-394/Cys-410, Cys-412/Cys-421, Cys-424/Cys-436, Cys-439/Cys-450, Cys-441/Cys-457, Cys-459/Cys-468, and Cys-471/Cys-486. 4 consecutive Laminin EGF-like domains span residues Cys-280–Pro-335, Cys-336–Pro-391, Cys-392–Pro-438, and Cys-439–Ser-488. Asn-304 carries an N-linked (GlcNAc...) asparagine glycan. Asn-337 carries N-linked (GlcNAc...) asparagine glycosylation. A Laminin EGF-like 5; first part domain is found at Cys-489–Cys-498. Residues His-508 to Thr-684 enclose the Laminin IV type A domain. Asn-640 is a glycosylation site (N-linked (GlcNAc...) asparagine). One can recognise a Laminin EGF-like 5; second part domain in the interval Cys-685–Pro-718. Cystine bridges form between Cys-719-Cys-727, Cys-721-Cys-734, Cys-736-Cys-745, Cys-748-Cys-764, Cys-767-Cys-775, Cys-769-Cys-786, Cys-789-Cys-798, Cys-801-Cys-819, Cys-822-Cys-836, Cys-824-Cys-843, Cys-846-Cys-855, Cys-858-Cys-875, Cys-878-Cys-891, Cys-880-Cys-898, Cys-900-Cys-909, Cys-912-Cys-925, Cys-928-Cys-940, Cys-930-Cys-947, Cys-949-Cys-958, Cys-961-Cys-973, Cys-976-Cys-988, Cys-978-Cys-994, Cys-996-Cys-1005, and Cys-1008-Cys-1021. Laminin EGF-like domains lie at Cys-719–Pro-766, Cys-767–Arg-821, Cys-822–Pro-877, Cys-878–Ser-927, Cys-928–Asp-975, and Cys-976–Cys-1024. Residue Asn-849 is glycosylated (N-linked (GlcNAc...) asparagine). Asn-991 carries an N-linked (GlcNAc...) asparagine glycan. Positions Pro-1025–Ser-1581 are domain II and I. 2 coiled-coil regions span residues Ala-1029–Glu-1046 and Val-1112–Leu-1153. 2 N-linked (GlcNAc...) asparagine glycosylation sites follow: Asn-1162 and Asn-1196. A coiled-coil region spans residues Arg-1208 to Leu-1231. A glycan (N-linked (GlcNAc...) asparagine) is linked at Asn-1320. The tract at residues Lys-1382–Ser-1413 is disordered. Coiled coils occupy residues Ala-1438–Val-1468 and Ala-1510–Leu-1575. N-linked (GlcNAc...) asparagine glycosylation is present at Asn-1514.

Laminin is a complex glycoprotein, consisting of three different polypeptide chains (alpha, beta, gamma), which are bound to each other by disulfide bonds into a cross-shaped molecule comprising one long and three short arms with globules at each end. Gamma-3 is a subunit of laminin-12 (laminin-213), laminin-14 (laminin-423) and laminin-15 (laminin-523). Strongly expressed in capillaries and arterioles of kidney as well as in interstitial Leydig cells of testis.

The protein localises to the secreted. The protein resides in the extracellular space. It localises to the extracellular matrix. Its subcellular location is the basement membrane. In terms of biological role, binding to cells via a high affinity receptor, laminin is thought to mediate the attachment, migration and organization of cells into tissues during embryonic development by interacting with other extracellular matrix components. In Mus musculus (Mouse), this protein is Laminin subunit gamma-3 (Lamc3).